The following is a 370-amino-acid chain: NSFL1 cofactor p47 (370 aa).

The tract at residues 54 to 73 is disordered; it reads SQATPSSVSRGTAPSDNRVT. Phosphoserine is present on residues Ser74, Ser102, and Ser114. Disordered stretches follow at residues 80–116 and 137–157; these read HDQDEDEEEEEGQRFYAGGSERSGQQIVGPPRKRSPN and VTKSPGETSKPRPFAGGGYRL. The Nuclear localization signal signature appears at 109 to 115; the sequence is PPRKRSP. Phosphoserine; by CDK1 is present on Ser140. At Tyr167 the chain carries Phosphotyrosine. Residues 172–175 carry the Nuclear localization signal motif; sequence RRRH. Residues Ser176, Ser192, and Ser272 each carry the phosphoserine modification. The SEP domain occupies 179-244; sequence DVHVVLKLWK…MEDHRDEDFV (66 aa). The tract at residues 272–292 is disordered; it reads SPAQQAENEAKASSSISIDES. One can recognise a UBX domain in the interval 291-368; sequence ESQPTTNIQI…NLLNAVIVQR (78 aa).

Part of a ternary complex containing STX5A, NSFL1C and VCP. NSFL1C forms a homotrimer that binds to one end of a VCP homohexamer. The complex binds to membranes enriched in phosphatidylethanolamine-containing lipids and promotes Golgi membrane fusion. Interaction with VCIP135 leads to dissociation of the complex via ATP hydrolysis by VCP. Binds ubiquitin and mono-ubiquitinated proteins via its N-terminal UBA-like domain when bound to VCP. Post-translationally, phosphorylated during mitosis. Phosphorylation inhibits interaction with Golgi membranes and is required for the fragmentation of the Golgi stacks during mitosis.

It localises to the nucleus. It is found in the golgi apparatus. The protein resides in the golgi stack. Its subcellular location is the chromosome. The protein localises to the cytoplasm. It localises to the cytoskeleton. It is found in the microtubule organizing center. The protein resides in the centrosome. In terms of biological role, reduces the ATPase activity of VCP. Necessary for the fragmentation of Golgi stacks during mitosis and for VCP-mediated reassembly of Golgi stacks after mitosis. May play a role in VCP-mediated formation of transitional endoplasmic reticulum (tER). Inhibits the activity of CTSL (in vitro). Together with UBXN2B/p37, regulates the centrosomal levels of kinase AURKA/Aurora A during mitotic progression by promoting AURKA removal from centrosomes in prophase. Also, regulates spindle orientation during mitosis. In Bos taurus (Bovine), this protein is NSFL1 cofactor p47 (NSFL1C).